A 151-amino-acid polypeptide reads, in one-letter code: Large ribosomal subunit protein uL13 (151 aa).

Belongs to the universal ribosomal protein uL13 family. In terms of assembly, part of the 50S ribosomal subunit.

This protein is one of the early assembly proteins of the 50S ribosomal subunit, although it is not seen to bind rRNA by itself. It is important during the early stages of 50S assembly. The sequence is that of Large ribosomal subunit protein uL13 from Synechococcus elongatus (strain ATCC 33912 / PCC 7942 / FACHB-805) (Anacystis nidulans R2).